The following is a 496-amino-acid chain: MNRKRPLMVLGTSSGAGKSLMTAALCRVLHRRGEQPLPFKGQNMSNNAWVDADGGEMAYSQAMQAWAAGLEPCCAMNPVLLKPRGDSTSEVIHGGTSVGLARAEHYYRDWFRPGWQAIREGLQTMQQRWPNGRLVLEGAGSPVEVNLQRRDLTNLRLAQYLRANCLLVADIERGGVFAQIVGTLALLRPVERPLIKGILINRFRGRRELFDEGRSWLEQHTGVPVLGVMPWLNDLFPPEDSLDLLERKPNRGPTDLEIAVLKLPSISNFSDLDPLEAEPSLRLRWVHPGDSLGSPDAVLLPGSKQTLRDLETLRSSGLDRQLTAYATNGGSLLAICGGMQLLGQELHDPEQLEGGDGAGPWPGLGLLPLTTEFGGTKALRQREVQALWPGTTPISGFELHHGSTWASDDLQPICNEPGLGWWCATPAGGCIAGTYLHGLLDNGPWRRRWLNQLRERKGLAPLITGLPHHGEHRHQLLERLADAFEQHVDLTPLLQP.

Residues 255–445 (DLEIAVLKLP…LHGLLDNGPW (191 aa)) enclose the GATase cobBQ-type domain. C336 acts as the Nucleophile in catalysis. H437 is an active-site residue.

It belongs to the CobB/CobQ family. CobQ subfamily.

Its pathway is cofactor biosynthesis; adenosylcobalamin biosynthesis. In terms of biological role, catalyzes amidations at positions B, D, E, and G on adenosylcobyrinic A,C-diamide. NH(2) groups are provided by glutamine, and one molecule of ATP is hydrogenolyzed for each amidation. The polypeptide is Cobyric acid synthase (Parasynechococcus marenigrum (strain WH8102)).